We begin with the raw amino-acid sequence, 278 residues long: MAHDEQWLTPRLQTAATLCNQTPAATESPLWLGVDLGTCDVVSMVVDRDGQPVAVCLDWADVVRDGIVWDFFGAVTIVRRHLDTLEQQFGRRFSHAATSFPPGTDPRISINVLESAGLEVSHVLDEPTAVADLLQLDNAGVVDIGGGTTGIAIVKKGKVTYSADEATGGHHISLTLAGNRRISLEEAEQYKRGHGEEIWPAVKPVYEKMADIVARHIEGQGITDLWLAGGSCMQPGVAELFRKQFPALQVHLPQHSLFMTPLAIASSGREKAEGLYAK.

Belongs to the EutJ family.

The protein operates within amine and polyamine degradation; ethanolamine degradation. Its function is as follows. May protect ethanolamine ammonia-lyase (EAL, eutB-eutC) from inhibition, may function in assembling the bacterial microcompartment and/or in refolding EAL, suggesting it may have chaperone activity. This is Ethanolamine utilization protein EutJ (eutJ) from Escherichia coli (strain K12).